A 405-amino-acid chain; its full sequence is Arginine biosynthesis bifunctional protein ArgJ, mitochondrial (405 aa).

Substrate-binding residues include Thr-174, Lys-200, Thr-211, and Glu-300. Thr-211 acts as the Nucleophile in catalysis.

It belongs to the ArgJ family. In terms of assembly, heterodimer of an alpha and a beta chain. Post-translationally, the alpha and beta chains are autoproteolytically processed from a single precursor protein within the mitochondrion.

The protein localises to the mitochondrion matrix. It carries out the reaction N(2)-acetyl-L-ornithine + L-glutamate = N-acetyl-L-glutamate + L-ornithine. The enzyme catalyses L-glutamate + acetyl-CoA = N-acetyl-L-glutamate + CoA + H(+). It functions in the pathway amino-acid biosynthesis; L-arginine biosynthesis; L-ornithine and N-acetyl-L-glutamate from L-glutamate and N(2)-acetyl-L-ornithine (cyclic): step 1/1. It participates in amino-acid biosynthesis; L-arginine biosynthesis; N(2)-acetyl-L-ornithine from L-glutamate: step 1/4. In terms of biological role, catalyzes two activities which are involved in the cyclic version of arginine biosynthesis: the synthesis of acetylglutamate from glutamate and acetyl-CoA, and of ornithine by transacetylation between acetylornithine and glutamate. The protein is Arginine biosynthesis bifunctional protein ArgJ, mitochondrial of Candida tropicalis (strain ATCC MYA-3404 / T1) (Yeast).